The following is a 196-amino-acid chain: UMP-CMP kinase (196 aa).

ATP is bound at residue 13–18; it reads GAGKGT. Residues 33-63 form an NMP region; that stretch reads SAGDLLRDERKRPGSQYGELIENYIKEGEIV. A ribonucleoside 5'-phosphate contacts are provided by residues R39, 61–63, and 93–96; these read EIV and GFPR. N100 serves as a coordination point for CMP. An LID region spans residues 133-143; that stretch reads ERGKSSGRSDD. Residue R134 coordinates ATP. R140 and R151 together coordinate a ribonucleoside 5'-phosphate. K179 contacts ATP.

This sequence belongs to the adenylate kinase family. UMP-CMP kinase subfamily. Monomer. Mg(2+) serves as cofactor.

The protein resides in the nucleus. It is found in the cytoplasm. The catalysed reaction is CMP + ATP = CDP + ADP. It carries out the reaction dCMP + ATP = dCDP + ADP. The enzyme catalyses UMP + ATP = UDP + ADP. It catalyses the reaction a 2'-deoxyribonucleoside 5'-diphosphate + ATP = a 2'-deoxyribonucleoside 5'-triphosphate + ADP. The catalysed reaction is a ribonucleoside 5'-diphosphate + ATP = a ribonucleoside 5'-triphosphate + ADP. Catalyzes the phosphorylation of pyrimidine nucleoside monophosphates at the expense of ATP. Plays an important role in de novo pyrimidine nucleotide biosynthesis. Has preference for UMP and CMP as phosphate acceptors. Also displays broad nucleoside diphosphate kinase activity. The sequence is that of UMP-CMP kinase (CMPK) from Gallus gallus (Chicken).